A 375-amino-acid chain; its full sequence is Alcohol dehydrogenase 1 (375 aa).

Serine 2 is modified (N-acetylserine). Cysteine 47, histidine 68, cysteine 98, cysteine 101, cysteine 104, cysteine 112, and cysteine 175 together coordinate Zn(2+). NAD(+) contacts are provided by residues 200-205 (GLGGVG), aspartate 224, and lysine 229. At lysine 234 the chain carries N6-succinyllysine. NAD(+) is bound at residue 293–295 (VGV). The residue at position 340 (lysine 340) is an N6-succinyllysine. An NAD(+)-binding site is contributed by arginine 370.

This sequence belongs to the zinc-containing alcohol dehydrogenase family. Class-I subfamily. Zn(2+) serves as cofactor.

Its subcellular location is the cytoplasm. The catalysed reaction is a primary alcohol + NAD(+) = an aldehyde + NADH + H(+). It carries out the reaction a secondary alcohol + NAD(+) = a ketone + NADH + H(+). This Peromyscus maniculatus (North American deer mouse) protein is Alcohol dehydrogenase 1 (ADH1).